We begin with the raw amino-acid sequence, 290 residues long: MPTLKDIRVRIKGVKSTQQVTKAMKMVAAAKLRKAQERAVMARPYAAKLKEMLGSLSGKVDTSASPLLADRADASRVLVVLITSDRGLCGAFNTNIIKLAHRTIHEEYAAAYAAGNVQLICAGTRGFDFFRKRGYSVLKGYPAVFQNLDFSTAREIAETASSMYVKGEVDRVVVVYNEFKSVLAPTLKAEVLLPIKSELPVAEGGDYIYEPSPAAIIEELVPKHLNTQVWGMMLESNAAEQAARMTAMDSATENAKELLRGLNISYNRARQAAITKELSEIVGGADALQN.

Belongs to the ATPase gamma chain family. In terms of assembly, F-type ATPases have 2 components, CF(1) - the catalytic core - and CF(0) - the membrane proton channel. CF(1) has five subunits: alpha(3), beta(3), gamma(1), delta(1), epsilon(1). CF(0) has three main subunits: a, b and c.

It localises to the cell inner membrane. Functionally, produces ATP from ADP in the presence of a proton gradient across the membrane. The gamma chain is believed to be important in regulating ATPase activity and the flow of protons through the CF(0) complex. The sequence is that of ATP synthase gamma chain from Chlorobium luteolum (strain DSM 273 / BCRC 81028 / 2530) (Pelodictyon luteolum).